Reading from the N-terminus, the 507-residue chain is Dolichyl pyrophosphate Man9GlcNAc2 alpha-1,3-glucosyltransferase (507 aa).

Residues 1-2 (ME) are Cytoplasmic-facing. A helical transmembrane segment spans residues 3-23 (SWTWMTVVVLLGLTVRWTVSL). Residues 24 to 114 (NSYSGAGKPP…SQAHKLFMRT (91 aa)) lie on the Lumenal side of the membrane. N59 carries an N-linked (GlcNAc...) asparagine glycan. Residues 115-135 (TVLAADLLIYIPAVLLYCYSL) traverse the membrane as a helical segment. Residues 136–143 (KEISPKRK) lie on the Cytoplasmic side of the membrane. The helical transmembrane segment at 144–164 (IASALCILLYPGLILIDYGHF) threads the bilayer. Topologically, residues 165–172 (QYNSVSLG) are lumenal. Residues 173–193 (FALWGVLGVSCDWDLLGSLAF) form a helical membrane-spanning segment. Residues 194 to 229 (CLALNYKQMELYHSLPFFCFLLGKCFKKGLRGKGSA) lie on the Cytoplasmic side of the membrane. Residues 230–250 (LFIRIACTVVASFLLCWLPFL) traverse the membrane as a helical segment. Over 251-297 (TEREHALQVVRRLFPVDRGLFEDKVANIWCSLNVFLKIKDILPRHIQ) the chain is Lumenal. The chain crosses the membrane as a helical span at residues 298–318 (IAISFCFTFLSLLPACIKLTV). Residues 319 to 332 (QPSAKGFRFTLVSC) are Cytoplasmic-facing. A helical transmembrane segment spans residues 333 to 353 (ALSFFLFSFQVHEKSILLVSL). The Lumenal portion of the chain corresponds to 354–361 (PVCLVLTE). Residues 362–382 (IPFMSTWFLLVSTFSMLPLLL) traverse the membrane as a helical segment. Over 383 to 385 (KDQ) the chain is Cytoplasmic. The chain crosses the membrane as a helical span at residues 386 to 406 (LLLPSVVTVMAFLIACSTFFP). Over 407–437 (MFENTSEEQLQLKSFAVSVRRHLPGFTFLPR) the chain is Lumenal. Residues 438 to 458 (IIQCLFLSSVITMILLTILSV) form a helical membrane-spanning segment. Over 459 to 468 (TLDPPQKLPD) the chain is Cytoplasmic. The helical transmembrane segment at 469 to 489 (LFSVLICFVSCVNFVFFLVYF) threads the bilayer. The Lumenal segment spans residues 490 to 507 (NIVIMWDSKNGRNRKKID).

The protein belongs to the ALG6/ALG8 glucosyltransferase family.

Its subcellular location is the endoplasmic reticulum membrane. The enzyme catalyses an alpha-D-Man-(1-&gt;2)-alpha-D-Man-(1-&gt;2)-alpha-D-Man-(1-&gt;3)-[alpha-D-Man-(1-&gt;2)-alpha-D-Man-(1-&gt;3)-[alpha-D-Man-(1-&gt;2)-alpha-D-Man-(1-&gt;6)]-alpha-D-Man-(1-&gt;6)]-beta-D-Man-(1-&gt;4)-beta-D-GlcNAc-(1-&gt;4)-alpha-D-GlcNAc-diphospho-di-trans,poly-cis-dolichol + a di-trans,poly-cis-dolichyl beta-D-glucosyl phosphate = an alpha-D-Glc-(1-&gt;3)-alpha-D-Man-(1-&gt;2)-alpha-D-Man-(1-&gt;2)-alpha-D-Man-(1-&gt;3)-[alpha-D-Man-(1-&gt;2)-alpha-D-Man-(1-&gt;3)-[alpha-D-Man-(1-&gt;2)-alpha-D-Man-(1-&gt;6)]-alpha-D-Man-(1-&gt;6)]-beta-D-Man-(1-&gt;4)-beta-D-GlcNAc-(1-&gt;4)-alpha-D-GlcNAc-diphospho-di-trans,poly-cis-dolichol + a di-trans,poly-cis-dolichyl phosphate + H(+). It participates in protein modification; protein glycosylation. Functionally, dolichyl pyrophosphate Man9GlcNAc2 alpha-1,3-glucosyltransferase that operates in the biosynthetic pathway of dolichol-linked oligosaccharides, the glycan precursors employed in protein asparagine (N)-glycosylation. The assembly of dolichol-linked oligosaccharides begins on the cytosolic side of the endoplasmic reticulum membrane and finishes in its lumen. The sequential addition of sugars to dolichol pyrophosphate produces dolichol-linked oligosaccharides containing fourteen sugars, including two GlcNAcs, nine mannoses and three glucoses. Once assembled, the oligosaccharide is transferred from the lipid to nascent proteins by oligosaccharyltransferases. In the lumen of the endoplasmic reticulum, adds the first glucose residue from dolichyl phosphate glucose (Dol-P-Glc) onto the lipid-linked oligosaccharide intermediate Man(9)GlcNAc(2)-PP-Dol to produce Glc(1)Man(9)GlcNAc(2)-PP-Dol. Glc(1)Man(9)GlcNAc(2)-PP-Dol is a substrate for ALG8, the following enzyme in the biosynthetic pathway. In Rattus norvegicus (Rat), this protein is Dolichyl pyrophosphate Man9GlcNAc2 alpha-1,3-glucosyltransferase.